The primary structure comprises 213 residues: MSMIEEKIYKGTTTVGLVCKDGVVMATEKRATMGNFIASKAAKKIYQIADRMAMTTAGSVGDAQFLARIIKIEANLYEIRRERKPTVRAIATLTSNLLNSYRYFPYLVQLLIGGIDSEGKSIYSIDPIGGAIEEKDIVATGSGSLTAYGVLEDRFTPEIGVDEAVELAVRAIYSAMKRDSASGDGIDVVKITEDEFYQYSPEEVEQILAKFRK.

A propeptide spans 1–11 (MSMIEEKIYKG) (removed in mature form; by autocatalysis). The active-site Nucleophile is Thr12.

It belongs to the peptidase T1B family. As to quaternary structure, the 20S proteasome core is composed of 14 alpha and 14 beta subunits that assemble into four stacked heptameric rings, resulting in a barrel-shaped structure. The two inner rings, each composed of seven catalytic beta subunits, are sandwiched by two outer rings, each composed of seven alpha subunits. The catalytic chamber with the active sites is on the inside of the barrel. Has probably a gated structure, the ends of the cylinder being occluded by the N-termini of the alpha-subunits. Is likely capped at one or both ends by the proteasome regulatory ATPase, PAN.

It is found in the cytoplasm. It catalyses the reaction Cleavage of peptide bonds with very broad specificity.. The formation of the proteasomal ATPase PAN-20S proteasome complex, via the docking of the C-termini of PAN into the intersubunit pockets in the alpha-rings, triggers opening of the gate for substrate entry. Interconversion between the open-gate and close-gate conformations leads to a dynamic regulation of the 20S proteasome proteolysis activity. Component of the proteasome core, a large protease complex with broad specificity involved in protein degradation. In Archaeoglobus fulgidus (strain ATCC 49558 / DSM 4304 / JCM 9628 / NBRC 100126 / VC-16), this protein is Proteasome subunit beta.